The sequence spans 338 residues: Ketol-acid reductoisomerase (NADP(+)) (338 aa).

In terms of domain architecture, KARI N-terminal Rossmann spans 1–181; the sequence is MNVFYDKDAD…GGGRAGIIET (181 aa). Residues 24 to 27, R47, and S52 each bind NADP(+); that span reads YGSQ. Residue H107 is part of the active site. G133 serves as a coordination point for NADP(+). Residues 182 to 327 form the KARI C-terminal knotted domain; the sequence is NFREETETDL…AKLRAMMPWI (146 aa). Positions 190, 194, 226, and 230 each coordinate Mg(2+). S251 serves as a coordination point for substrate.

It belongs to the ketol-acid reductoisomerase family. Mg(2+) is required as a cofactor.

The enzyme catalyses (2R)-2,3-dihydroxy-3-methylbutanoate + NADP(+) = (2S)-2-acetolactate + NADPH + H(+). It carries out the reaction (2R,3R)-2,3-dihydroxy-3-methylpentanoate + NADP(+) = (S)-2-ethyl-2-hydroxy-3-oxobutanoate + NADPH + H(+). Its pathway is amino-acid biosynthesis; L-isoleucine biosynthesis; L-isoleucine from 2-oxobutanoate: step 2/4. The protein operates within amino-acid biosynthesis; L-valine biosynthesis; L-valine from pyruvate: step 2/4. In terms of biological role, involved in the biosynthesis of branched-chain amino acids (BCAA). Catalyzes an alkyl-migration followed by a ketol-acid reduction of (S)-2-acetolactate (S2AL) to yield (R)-2,3-dihydroxy-isovalerate. In the isomerase reaction, S2AL is rearranged via a Mg-dependent methyl migration to produce 3-hydroxy-3-methyl-2-ketobutyrate (HMKB). In the reductase reaction, this 2-ketoacid undergoes a metal-dependent reduction by NADPH to yield (R)-2,3-dihydroxy-isovalerate. This chain is Ketol-acid reductoisomerase (NADP(+)), found in Burkholderia lata (strain ATCC 17760 / DSM 23089 / LMG 22485 / NCIMB 9086 / R18194 / 383).